The sequence spans 1394 residues: DNA-directed RNA polymerase subunit beta' (1394 aa).

Zn(2+)-binding residues include Cys-71, Cys-73, Cys-86, and Cys-89. Mg(2+)-binding residues include Asp-462, Asp-464, and Asp-466. Residues Cys-811, Cys-885, Cys-892, and Cys-895 each coordinate Zn(2+).

This sequence belongs to the RNA polymerase beta' chain family. The RNAP catalytic core consists of 2 alpha, 1 beta, 1 beta' and 1 omega subunit. When a sigma factor is associated with the core the holoenzyme is formed, which can initiate transcription. It depends on Mg(2+) as a cofactor. The cofactor is Zn(2+).

The catalysed reaction is RNA(n) + a ribonucleoside 5'-triphosphate = RNA(n+1) + diphosphate. DNA-dependent RNA polymerase catalyzes the transcription of DNA into RNA using the four ribonucleoside triphosphates as substrates. This is DNA-directed RNA polymerase subunit beta' from Xanthobacter autotrophicus (strain ATCC BAA-1158 / Py2).